The sequence spans 255 residues: Zinc import ATP-binding protein ZnuC (255 aa).

The ABC transporter domain maps to 4–219 (VDVDGLSLRY…PEYRALFGTG (216 aa)). Residue 36–43 (GPNGSGKT) coordinates ATP. Residues 234-255 (EHDHHDGCAHGQATEDRTEAAE) form a disordered region.

It belongs to the ABC transporter superfamily. Zinc importer (TC 3.A.1.15.5) family. The complex is composed of two ATP-binding proteins (ZnuC), two transmembrane proteins (ZnuB) and a solute-binding protein (ZnuA).

It localises to the cell inner membrane. The enzyme catalyses Zn(2+)(out) + ATP(in) + H2O(in) = Zn(2+)(in) + ADP(in) + phosphate(in) + H(+)(in). In terms of biological role, part of the ABC transporter complex ZnuABC involved in zinc import. Responsible for energy coupling to the transport system. This chain is Zinc import ATP-binding protein ZnuC, found in Roseobacter denitrificans (strain ATCC 33942 / OCh 114) (Erythrobacter sp. (strain OCh 114)).